We begin with the raw amino-acid sequence, 732 residues long: Subtilisin-like protease SBT4.13 (732 aa).

The signal sequence occupies residues 1–24 (MATLAASSSLLSCLLVLFLSSVSA). The propeptide at 25-109 (VTDDKQVYIV…VFPNKKLQLQ (85 aa)) is activation peptide. In terms of domain architecture, Inhibitor I9 spans 31–108 (VYIVYMGSLS…SVFPNKKLQL (78 aa)). The Peptidase S8 domain occupies 113–579 (SWDFMGLKEG…SGHVDPIAAS (467 aa)). The Charge relay system role is filled by D141. N-linked (GlcNAc...) asparagine glycosylation is present at N172. The Charge relay system role is filled by H196. A glycan (N-linked (GlcNAc...) asparagine) is linked at N219. Residues 352–436 (DYPLVYGKSA…GLLTEDFESL (85 aa)) enclose the PA domain. The N-linked (GlcNAc...) asparagine glycan is linked to N458. The active-site Charge relay system is S518. N555, N600, N648, and N658 each carry an N-linked (GlcNAc...) asparagine glycan.

The protein belongs to the peptidase S8 family. In terms of processing, the C-terminal propeptide is autocleaved.

It localises to the secreted. This Arabidopsis thaliana (Mouse-ear cress) protein is Subtilisin-like protease SBT4.13.